The chain runs to 204 residues: MIKIVDYGLGNIQAFANLYKRLHIPVVVARTADELAGATKIILPGVGAFDHAMARLNESGMREILESLVQKDKVPVLGICVGMQMLANSSDEGVLPGLGWVPGRVREFRNIPGLEGIAQPHMGWNDVKPVVSSGLFKGLETDARFYFLHSFFFECQNPDYSLASANYGLEFSCAVANRNVYGVQFHPEKSHDFGMTLLKNFSEI.

One can recognise a Glutamine amidotransferase type-1 domain in the interval Met1 to Ile204. The active-site Nucleophile is Cys80. Residues His186 and Glu188 contribute to the active site.

Heterodimer of HisH and HisF.

It localises to the cytoplasm. It catalyses the reaction 5-[(5-phospho-1-deoxy-D-ribulos-1-ylimino)methylamino]-1-(5-phospho-beta-D-ribosyl)imidazole-4-carboxamide + L-glutamine = D-erythro-1-(imidazol-4-yl)glycerol 3-phosphate + 5-amino-1-(5-phospho-beta-D-ribosyl)imidazole-4-carboxamide + L-glutamate + H(+). It carries out the reaction L-glutamine + H2O = L-glutamate + NH4(+). Its pathway is amino-acid biosynthesis; L-histidine biosynthesis; L-histidine from 5-phospho-alpha-D-ribose 1-diphosphate: step 5/9. Functionally, IGPS catalyzes the conversion of PRFAR and glutamine to IGP, AICAR and glutamate. The HisH subunit catalyzes the hydrolysis of glutamine to glutamate and ammonia as part of the synthesis of IGP and AICAR. The resulting ammonia molecule is channeled to the active site of HisF. The sequence is that of Imidazole glycerol phosphate synthase subunit HisH from Bdellovibrio bacteriovorus (strain ATCC 15356 / DSM 50701 / NCIMB 9529 / HD100).